A 208-amino-acid polypeptide reads, in one-letter code: Ribosomal RNA small subunit methyltransferase G (208 aa).

Residues glycine 73, leucine 78, valine 127–glutamate 128, and arginine 141 each bind S-adenosyl-L-methionine.

This sequence belongs to the methyltransferase superfamily. RNA methyltransferase RsmG family.

Its subcellular location is the cytoplasm. The catalysed reaction is guanosine(527) in 16S rRNA + S-adenosyl-L-methionine = N(7)-methylguanosine(527) in 16S rRNA + S-adenosyl-L-homocysteine. Functionally, specifically methylates the N7 position of guanine in position 527 of 16S rRNA. The chain is Ribosomal RNA small subunit methyltransferase G from Cereibacter sphaeroides (strain ATCC 17025 / ATH 2.4.3) (Rhodobacter sphaeroides).